A 285-amino-acid polypeptide reads, in one-letter code: Homeobox protein Hox-A4 (285 aa).

Disordered stretches follow at residues 19–70 (PFEE…APRA) and 94–130 (ASPG…TTPA). The span at 27–41 (GGPGGGDGAVGGGPG) shows a compositional bias: gly residues. Residues 44–70 (RPQSAPHLPAPNPHAARQPPAYYAPRA) are compositionally biased toward low complexity. A compositionally biased stretch (pro residues) spans 106–118 (GAHPSPAPQPPVP). The Antp-type hexapeptide motif lies at 159-164 (VYPWMK). Residues 180-239 (PKRSRTAYTRQQVLELEKEFHFNRYLTRRRRIEIAHTLCLSERQVKIWFQNRRMKWKKDH) constitute a DNA-binding region (homeobox). The tract at residues 238 to 285 (DHKLPNTKMRSSNTASAPAGPPGKAQTHSPHHHPHPLPGASTPIPSSI) is disordered.

Belongs to the Antp homeobox family. Deformed subfamily.

The protein localises to the nucleus. In terms of biological role, sequence-specific transcription factor which is part of a developmental regulatory system that provides cells with specific positional identities on the anterior-posterior axis. Binds to sites in the 5'-flanking sequence of its coding region with various affinities. The consensus sequences of the high and low affinity binding sites are 5'-TAATGA[CG]-3' and 5'-CTAATTTT-3'. The protein is Homeobox protein Hox-A4 (Hoxa4) of Mus musculus (Mouse).